Consider the following 317-residue polypeptide: GTP cyclohydrolase MptA (317 aa).

It belongs to the GTP cyclohydrolase IV family. Homodimer. The cofactor is Fe(2+).

It carries out the reaction GTP + H2O = 7,8-dihydroneopterin 2',3'-cyclic phosphate + formate + diphosphate + H(+). It functions in the pathway cofactor biosynthesis; 5,6,7,8-tetrahydromethanopterin biosynthesis. Functionally, converts GTP to 7,8-dihydro-D-neopterin 2',3'-cyclic phosphate, the first intermediate in the biosynthesis of coenzyme methanopterin. In Methanococcoides burtonii (strain DSM 6242 / NBRC 107633 / OCM 468 / ACE-M), this protein is GTP cyclohydrolase MptA.